We begin with the raw amino-acid sequence, 295 residues long: Small ribosomal subunit protein mS23 (295 aa).

Positions 249 to 295 (IGSVVEEEKSQSSLFEDLLSNDNLQSEPEVEQSGQQQQQEQPKQETN) are disordered. Residues 273-289 (QSEPEVEQSGQQQQQEQ) show a composition bias toward low complexity.

The protein belongs to the mitochondrion-specific ribosomal protein mS23 family. As to quaternary structure, component of the mitochondrial small ribosomal subunit (mt-SSU).

It is found in the mitochondrion. Its function is as follows. Component of the mitochondrial ribosome (mitoribosome), a dedicated translation machinery responsible for the synthesis of mitochondrial genome-encoded proteins, including at least some of the essential transmembrane subunits of the mitochondrial respiratory chain. The mitoribosomes are attached to the mitochondrial inner membrane and translation products are cotranslationally integrated into the membrane. The sequence is that of Small ribosomal subunit protein mS23 (RSM25) from Candida albicans (strain SC5314 / ATCC MYA-2876) (Yeast).